Here is a 63-residue protein sequence, read N- to C-terminus: Large ribosomal subunit protein uL29 (63 aa).

This sequence belongs to the universal ribosomal protein uL29 family.

The chain is Large ribosomal subunit protein uL29 from Stutzerimonas stutzeri (strain A1501) (Pseudomonas stutzeri).